The chain runs to 527 residues: Putative BTB/POZ domain and WD-repeat protein R783 (527 aa).

The 71-residue stretch at 45–115 folds into the BTB domain; the sequence is TDVTIVLDDG…FYSQNTDTRN (71 aa). WD repeat units lie at residues 215-266, 272-310, 313-353, 355-391, and 436-476; these read IHGD…VEAS, NVKT…LIKT, KHKN…IVRC, ISPV…FLFK, and YCPS…DNKY.

This sequence belongs to the mimivirus BTB/WD family.

This chain is Putative BTB/POZ domain and WD-repeat protein R783, found in Acanthamoeba polyphaga (Amoeba).